A 262-amino-acid chain; its full sequence is Phosphatidylglycerol--prolipoprotein diacylglyceryl transferase (262 aa).

A run of 4 helical transmembrane segments spans residues 9–29 (LGPL…ILAV), 41–61 (IIPD…ILGA), 80–100 (IFAI…GALV), and 109–129 (LINT…AQSL). Arg-131 serves as a coordination point for a 1,2-diacyl-sn-glycero-3-phospho-(1'-sn-glycerol). Transmembrane regions (helical) follow at residues 167–187 (QPTF…ILIF), 197–217 (GHIT…IEGM), and 227–247 (LRVS…IVIY).

The protein belongs to the Lgt family.

It is found in the cell membrane. The catalysed reaction is L-cysteinyl-[prolipoprotein] + a 1,2-diacyl-sn-glycero-3-phospho-(1'-sn-glycerol) = an S-1,2-diacyl-sn-glyceryl-L-cysteinyl-[prolipoprotein] + sn-glycerol 1-phosphate + H(+). It participates in protein modification; lipoprotein biosynthesis (diacylglyceryl transfer). In terms of biological role, catalyzes the transfer of the diacylglyceryl group from phosphatidylglycerol to the sulfhydryl group of the N-terminal cysteine of a prolipoprotein, the first step in the formation of mature lipoproteins. This Streptococcus pneumoniae (strain JJA) protein is Phosphatidylglycerol--prolipoprotein diacylglyceryl transferase.